Here is a 95-residue protein sequence, read N- to C-terminus: Gas vesicle protein S (95 aa).

Belongs to the gas vesicle GvpA family.

It localises to the gas vesicle. Functionally, probably a minor component of the gas vesicle. It is not clear what function gas vesicles perform in soil bacteria. When a minimal gvp locus (gvpA2-gvpR-gvpN-gvpF-gvpG-gvpL-gvpS-gvpK-gvpJ-gvpT-gvpU, called pNL29) is expressed in E.coli gas vesicles are made. The polypeptide is Gas vesicle protein S (Priestia megaterium (Bacillus megaterium)).